We begin with the raw amino-acid sequence, 73 residues long: Large ribosomal subunit protein bL31 (73 aa).

This sequence belongs to the bacterial ribosomal protein bL31 family. Type A subfamily. As to quaternary structure, part of the 50S ribosomal subunit.

Its function is as follows. Binds the 23S rRNA. The sequence is that of Large ribosomal subunit protein bL31 from Cereibacter sphaeroides (strain ATCC 17029 / ATH 2.4.9) (Rhodobacter sphaeroides).